Reading from the N-terminus, the 206-residue chain is Triosephosphate isomerase (206 aa).

Residue histidine 76 is the Electrophile of the active site. The active-site Proton acceptor is the glutamate 146.

Belongs to the triosephosphate isomerase family. In terms of assembly, homodimer.

The enzyme catalyses D-glyceraldehyde 3-phosphate = dihydroxyacetone phosphate. It functions in the pathway carbohydrate biosynthesis; gluconeogenesis. It participates in carbohydrate degradation; glycolysis; D-glyceraldehyde 3-phosphate from glycerone phosphate: step 1/1. The sequence is that of Triosephosphate isomerase (Tpi) from Aedes togoi (Mosquito).